A 427-amino-acid polypeptide reads, in one-letter code: Serine--tRNA ligase (427 aa).

236–238 (TAE) contacts L-serine. ATP is bound at residue 267–269 (RRE). Glutamate 290 contacts L-serine. 354-357 (EISS) provides a ligand contact to ATP. Serine 390 is a binding site for L-serine.

This sequence belongs to the class-II aminoacyl-tRNA synthetase family. Type-1 seryl-tRNA synthetase subfamily. In terms of assembly, homodimer. The tRNA molecule binds across the dimer.

The protein resides in the cytoplasm. It catalyses the reaction tRNA(Ser) + L-serine + ATP = L-seryl-tRNA(Ser) + AMP + diphosphate + H(+). The catalysed reaction is tRNA(Sec) + L-serine + ATP = L-seryl-tRNA(Sec) + AMP + diphosphate + H(+). It participates in aminoacyl-tRNA biosynthesis; selenocysteinyl-tRNA(Sec) biosynthesis; L-seryl-tRNA(Sec) from L-serine and tRNA(Sec): step 1/1. Catalyzes the attachment of serine to tRNA(Ser). Is also able to aminoacylate tRNA(Sec) with serine, to form the misacylated tRNA L-seryl-tRNA(Sec), which will be further converted into selenocysteinyl-tRNA(Sec). In Rippkaea orientalis (strain PCC 8801 / RF-1) (Cyanothece sp. (strain PCC 8801)), this protein is Serine--tRNA ligase.